The following is a 156-amino-acid chain: Small ribosomal subunit protein uS7 (156 aa).

Belongs to the universal ribosomal protein uS7 family. As to quaternary structure, part of the 30S ribosomal subunit. Contacts proteins S9 and S11.

In terms of biological role, one of the primary rRNA binding proteins, it binds directly to 16S rRNA where it nucleates assembly of the head domain of the 30S subunit. Is located at the subunit interface close to the decoding center, probably blocks exit of the E-site tRNA. This chain is Small ribosomal subunit protein uS7, found in Rhodococcus erythropolis (strain PR4 / NBRC 100887).